The sequence spans 616 residues: Probable methyltransferase PMT2 (616 aa).

At methionine 1–arginine 13 the chain is on the cytoplasmic side. Residues serine 14–tryptophan 34 traverse the membrane as a helical; Signal-anchor for type II membrane protein segment. At glutamine 35–histidine 616 the chain is on the lumenal side. N-linked (GlcNAc...) asparagine glycosylation is found at asparagine 205 and asparagine 611.

The protein belongs to the methyltransferase superfamily.

It is found in the golgi apparatus membrane. This Arabidopsis thaliana (Mouse-ear cress) protein is Probable methyltransferase PMT2.